Reading from the N-terminus, the 896-residue chain is Isoleucine--tRNA ligase (896 aa).

The 'HIGH' region motif lies at 57-67 (PYANNNIHIGH). Glutamate 543 serves as a coordination point for L-isoleucyl-5'-AMP. The 'KMSKS' region signature appears at 584–588 (KMSKS). Lysine 587 contributes to the ATP binding site. Zn(2+) contacts are provided by cysteine 869, cysteine 872, cysteine 885, and cysteine 888.

The protein belongs to the class-I aminoacyl-tRNA synthetase family. IleS type 1 subfamily. In terms of assembly, monomer. Zn(2+) serves as cofactor.

It is found in the cytoplasm. The catalysed reaction is tRNA(Ile) + L-isoleucine + ATP = L-isoleucyl-tRNA(Ile) + AMP + diphosphate. In terms of biological role, catalyzes the attachment of isoleucine to tRNA(Ile). As IleRS can inadvertently accommodate and process structurally similar amino acids such as valine, to avoid such errors it has two additional distinct tRNA(Ile)-dependent editing activities. One activity is designated as 'pretransfer' editing and involves the hydrolysis of activated Val-AMP. The other activity is designated 'posttransfer' editing and involves deacylation of mischarged Val-tRNA(Ile). This is Isoleucine--tRNA ligase from Acholeplasma laidlawii (strain PG-8A).